Consider the following 133-residue polypeptide: Histone H2A.1 (133 aa).

Residues 1 to 23 (MSTTGKGGKAKGKTASSKQVSRS) are disordered. Residue S2 is modified to N-acetylserine. K6, K9, K11, K13, and K18 each carry N6-acetyllysine. S123 is subject to Phosphoserine. K124 is covalently cross-linked (Glycyl lysine isopeptide (Lys-Gly) (interchain with G-Cter in ubiquitin)).

It belongs to the histone H2A family. The nucleosome is a histone octamer containing two molecules each of H2A, H2B, H3 and H4 assembled in one H3-H4 heterotetramer and two H2A-H2B heterodimers. The octamer wraps approximately 147 bp of DNA. Post-translationally, monoubiquitination of Lys-124 gives a specific tag for epigenetic transcriptional repression. In terms of processing, acetylation occurs almost exclusively in the MAC.

The protein localises to the nucleus. It localises to the chromosome. Its function is as follows. Core component of nucleosome. Nucleosomes wrap and compact DNA into chromatin, limiting DNA accessibility to the cellular machineries which require DNA as a template. Histones thereby play a central role in transcription regulation, DNA repair, DNA replication and chromosomal stability. DNA accessibility is regulated via a complex set of post-translational modifications of histones, also called histone code, and nucleosome remodeling. The polypeptide is Histone H2A.1 (HTA2) (Tetrahymena thermophila (strain SB210)).